The primary structure comprises 275 residues: Sororin-B (275 aa).

Basic and acidic residues predominate over residues 1 to 16 (MSERKKRGSSDADSRR). Disordered regions lie at residues 1–42 (MSER…PAPI) and 63–117 (NTGS…EIDV). Composition is skewed to polar residues over residues 63–76 (NTGSQFTPKVSNVT) and 93–112 (NAFSEQSQMDPKDVTSQSSA). Positions 91-93 (KEN) match the KEN box motif. The FGF motif signature appears at 186-188 (FGF). The tract at residues 253–275 (VDEWAAIMNAEFDEAEKFDLTVE) is C-terminal Sororin domain.

This sequence belongs to the sororin family. Interacts with the APC/C complex. Interacts with the chromatin-bound cohesin complex; the interaction is indirect, occurs after DNA replication and requires acetylation of the cohesin component smc3. Interacts (via the FGF motif) with pds5a and pds5b; the interaction is direct and prevents the interaction of pds5a with wapl. Post-translationally, ubiquitinated by the APC/C complex in G1, leading to its degradation.

It is found in the nucleus. The protein resides in the chromosome. It localises to the cytoplasm. Functionally, regulator of sister chromatid cohesion in mitosis stabilizing cohesin complex association with chromatin. May antagonize the action of wapl which stimulates cohesin dissociation from chromatin. Cohesion ensures that chromosome partitioning is accurate in both meiotic and mitotic cells and plays an important role in DNA repair. Required for efficient DNA double-stranded break repair. The polypeptide is Sororin-B (cdca5-b) (Xenopus laevis (African clawed frog)).